Consider the following 350-residue polypeptide: Izumo sperm-egg fusion protein 1 (350 aa).

Positions 1-21 are cleaved as a signal peptide; sequence MGPHFTLLCAALAGCLLPAEG. 5 disulfide bridges follow: Cys-22–Cys-149, Cys-25–Cys-152, Cys-135–Cys-159, Cys-139–Cys-165, and Cys-182–Cys-233. Over 22-292 the chain is Extracellular; that stretch reads CVICDPSVVL…LQPEKMLASR (271 aa). Residues 148 to 160 form an important for interaction with IZUMO1R region; it reads WCKNCKKEVHACR. The Ig-like C2-type domain maps to 167–251; it reads ERNVEVPQME…PATIINFHVT (85 aa). N-linked (GlcNAc...) asparagine glycosylation is present at Asn-204. The helical transmembrane segment at 293 to 313 threads the bilayer; that stretch reads LLGLLICGSLALITGLTFAIF. The Cytoplasmic segment spans residues 314–350; that stretch reads RRRKVIDFIKSSLFGLGSGAAEQTQVPKEKATDSRQQ. Ser-325 carries the post-translational modification Phosphoserine.

Belongs to the Izumo family. As to quaternary structure, monomer, homodimer; disulfide-linked and homooligomer; depending on the context. Interacts with IZUMO1R/JUNO. IZUMO1 and IZUMO1R/JUNO form a complex with 1:1 stoichiometry. In gamete recognition, IZUMO1R/JUNO first binds to monomeric IZUMO1. The weak, but specific interaction with IZUMO1R/JUNO induces IZUMO1 homodimerization. The process follows a tight binding phase where IZUMO1 bends the entire structure towards the sperm membrane side through a thiol-disulfide exchange reaction. The molecule no longer binds to IZUMO1R/JUNO and instead binds to a putative second oocyte receptor. Interacts with ACE3. Part of a oolemmal binding multimeric complex (IZUMO1 complex) composed at least of IZUMO1 and GLIPR1L1; the complex assemblage is influenced by the maturation status of the male germ cell. Interacts with GLIPR1L1. Interacts with FREY; the interaction retains IZUMO1 at the endoplasmic reticulum membrane and coordinates IZUMO1 complex assembly. Interacts with FCRL3/MAIA (via extracellular domain); the interaction replaces IZUMO1R/JUNO as IZUMO1 receptor after sperm-egg adhesion. Interacts with WDR54. Forms a complex with SPACA6 and TMEM81 on spermatocyte cell membrane. N-glycosylated. Glycosylation is not essential for fusion and for proper protein trafficking in sperm. In terms of processing, phosphorylated. The cytoplasmic C-terminus is phosphorylated and undergoes phosphorylation changes during epididymal transit. In terms of tissue distribution, sperm-specific (at protein level). Detectable on sperm surface only after the acrosome reaction.

Its subcellular location is the cell membrane. The protein resides in the cytoplasmic vesicle. The protein localises to the secretory vesicle. It localises to the acrosome membrane. Its function is as follows. Essential sperm cell-surface protein required for fertilization by acting as a ligand for IZUMO1R/JUNO receptor on egg. The IZUMO1:IZUMO1R/JUNO interaction is a necessary adhesion event between sperm and egg that is required for fertilization but is not sufficient for cell fusion. The ligand-receptor interaction probably does not act as a membrane 'fusogen'. Acts a ligand for the human-specific oolemma epitope FCRL3/MAIA during fertilization. FCRL3/MAIA replaces IZUMO1R/JUNO as IZUMO1 receptor after sperm-egg adhesion, which permits species-specific gamete fusion. Plays a critical role in sperm-oolemma binding prior to plasma membrane fusion. Can mediate cell-cell fusion in cultured mammalian cells independently of its binding to IZUMO1R/JUNO. The sequence is that of Izumo sperm-egg fusion protein 1 from Homo sapiens (Human).